Reading from the N-terminus, the 78-residue chain is Cytochrome c oxidase subunit 6b-2 (78 aa).

The CHCH domain maps to Thr-22–Trp-65. A Cx9C motif motif is present at residues Cys-25 to Cys-35. 2 cysteine pairs are disulfide-bonded: Cys-25–Cys-57 and Cys-35–Cys-46. A Cx10C motif motif is present at residues Cys-46–Cys-57.

This sequence belongs to the cytochrome c oxidase subunit 6B (TC 3.D.4.8) family. Specifically expressed in roots.

It is found in the mitochondrion. This protein is one of the nuclear-coded polypeptide chains of cytochrome c oxidase, the terminal oxidase in mitochondrial electron transport. This protein may be one of the heme-binding subunits of the oxidase. This is Cytochrome c oxidase subunit 6b-2 (COX6B-2) from Arabidopsis thaliana (Mouse-ear cress).